The chain runs to 385 residues: Heat-inducible transcription repressor HrcA (385 aa).

Belongs to the HrcA family.

Negative regulator of class I heat shock genes (grpE-dnaK-dnaJ and groELS operons). Prevents heat-shock induction of these operons. This Protochlamydia amoebophila (strain UWE25) protein is Heat-inducible transcription repressor HrcA.